The chain runs to 240 residues: Pro-opiomelanocortin B (240 aa).

A signal peptide spans 1 to 36; sequence MFGTFLQNQSVRLNMVCAPWLLAVVVVCVCNPGVEG. Q37 bears the Pyrrolidone carboxylic acid mark. H111 is a propeptide. Residue S112 is modified to N-acetylserine; in Corticotropin. I124 carries the isoleucine amide modification.

The protein belongs to the POMC family. Post-translationally, specific enzymatic cleavages at paired basic residues yield the different active peptides. In terms of processing, acetylation of beta-endorphin occurs in a tissue-specific manner. Pituitary and hypothalamus of adult diploid animals.

It is found in the secreted. Functionally, stimulates the adrenal glands to release cortisol. Its function is as follows. Melanocyte-stimulating hormone alpha: Anorexigenic peptide. Increases the pigmentation of skin by increasing melanin production in melanocytes. In terms of biological role, melanocyte-stimulating hormone beta: Increases the pigmentation of skin by increasing melanin production in melanocytes. Beta-endorphin: Endogenous orexigenic opiate. Functionally, endogenous opiate. This is Pro-opiomelanocortin B (pomcb) from Oncorhynchus mykiss (Rainbow trout).